The sequence spans 593 residues: Numb-related protein 1 (593 aa).

Disordered regions lie at residues 1–97 (MSAS…WQPD), 235–278 (TAQV…NSRS), 331–375 (LRQG…FGTQ), and 493–581 (MSMS…DPFD). Position 17 is a phosphoserine; by PKC (serine 17). Positions 27–37 (QNSLVSEQQPS) are enriched in polar residues. The segment covering 64-74 (RSLRLPKKRRD) has biased composition (basic residues). Phosphoserine; by PKC is present on serine 65. The PID domain occupies 102–255 (RTGTCCFNVK…STSSTPPKDI (154 aa)). Polar residues-rich tracts occupy residues 236–251 (AQVN…SSTP), 261–278 (EDNT…NSRS), and 354–364 (SLRTVSNNPTE). Low complexity predominate over residues 493–511 (MSMSPTSPSSDPPSTSSYS). Pro residues predominate over residues 516-528 (SGPPPAHAPPPLP). Residues 532–565 (AVSNGSPSIYQQQLQQANSTRNSPAGINWNSSPN) are compositionally biased toward polar residues.

In terms of assembly, interacts with pkc-3. In terms of tissue distribution, expressed in cells comprising the intestine, pharyngeal cells, the anal sphincter and depressor muscles.

Its subcellular location is the cytoplasm. The protein resides in the cell cortex. It is found in the cytoskeleton. It localises to the membrane. In terms of biological role, involved in the tethering and targeting of pkc-3 to modulate the intracellular distribution of the kinase. The complex formed with pkc-3 complexes are likely to be involved in assembly, maintenance, and/or regulation of protein complexes that execute asymmetric and/or polarized cell functions. This Caenorhabditis elegans protein is Numb-related protein 1.